Consider the following 91-residue polypeptide: Elongation factor 1-beta (91 aa).

The protein belongs to the EF-1-beta/EF-1-delta family.

Its function is as follows. Promotes the exchange of GDP for GTP in EF-1-alpha/GDP, thus allowing the regeneration of EF-1-alpha/GTP that could then be used to form the ternary complex EF-1-alpha/GTP/AAtRNA. This is Elongation factor 1-beta from Thermofilum pendens (strain DSM 2475 / Hrk 5).